Reading from the N-terminus, the 466-residue chain is Transcription factor SOX-10 (466 aa).

A disordered region spans residues 1–67 (MAEEQDLSEV…QQDGEADDDK (67 aa)). Over residues 23–32 (LSPGSAPSLG) the composition is skewed to low complexity. S24 carries the post-translational modification Phosphoserine. The segment at 62–102 (EADDDKFPVCIREAVSQVLSGYDWTLVPMPVRVNGASKSKP) is dimerization (DIM). A DNA-binding region (HMG box) is located at residues 104 to 172 (VKRPMNAFMV…QHKKDHPDYK (69 aa)). Residues 134–145 (LSKTLGKLWRLL) carry the Nuclear export signal motif. 2 stretches are compositionally biased toward basic and acidic residues: residues 160–173 (LRMQHKKDHPDYKY) and 254–271 (ADPKRDGRSMGEGGKPHI). Disordered regions lie at residues 160–199 (LRMQHKKDHPDYKYQPRRRKNGKAAQGEAECPGGEAEQGG), 212–274 (LDHR…IDFG), 354–375 (AQVKTETAGPQGPPHYTDQPST), and 433–466 (RPLYTAISDPSPSGPQSHSPTHWEQPVYTTLSRP). The segment at 228–310 (PEHPSGQSHG…LPPNGHPGHV (83 aa)) is transactivation domain (TAM). A transactivation domain (TAC) region spans residues 353–466 (KAQVKTETAG…QPVYTTLSRP (114 aa)). Positions 440 to 466 (SDPSPSGPQSHSPTHWEQPVYTTLSRP) are enriched in polar residues.

In terms of assembly, monomer. Interacts with ARMCX3 at the mitochondrial outer membrane surface. Interacts with PAX3. Expressed in fetal brain and in adult brain, heart, small intestine and colon.

Its subcellular location is the cytoplasm. It localises to the nucleus. The protein resides in the mitochondrion outer membrane. Transcription factor that plays a central role in developing and mature glia. Specifically activates expression of myelin genes, during oligodendrocyte (OL) maturation, such as DUSP15 and MYRF, thereby playing a central role in oligodendrocyte maturation and CNS myelination. Once induced, MYRF cooperates with SOX10 to implement the myelination program. Transcriptional activator of MITF, acting synergistically with PAX3. Transcriptional activator of MBP, via binding to the gene promoter. The chain is Transcription factor SOX-10 (SOX10) from Homo sapiens (Human).